The primary structure comprises 461 residues: Protein DVR-1 homolog (461 aa).

A signal peptide spans 1 to 30 (MEYSRKTYLDLNIMAKYILILSLFFGPGLS). Positions 31–338 (WDVFYSGDED…QKKGGKRPRK (308 aa)) are excised as a propeptide. Asn-149 is a glycosylation site (N-linked (GlcNAc...) asparagine). A disordered region spans residues 317-351 (SHLRRNRRAATRQKKGGKRPRKPDTDNDIASRDSA). Over residues 318-337 (HLRRNRRAATRQKKGGKRPR) the composition is skewed to basic residues. A compositionally biased stretch (basic and acidic residues) spans 338–347 (KPDTDNDIAS). Disulfide bonds link Cys-360-Cys-426, Cys-389-Cys-458, and Cys-393-Cys-460. Asn-402 is a glycosylation site (N-linked (GlcNAc...) asparagine).

It belongs to the TGF-beta family. In terms of assembly, homodimer; disulfide-linked.

The protein localises to the secreted. This is Protein DVR-1 homolog (DVR1) from Strongylocentrotus purpuratus (Purple sea urchin).